The sequence spans 328 residues: 4-hydroxythreonine-4-phosphate dehydrogenase (328 aa).

Residues H134 and T135 each contribute to the substrate site. A divalent metal cation contacts are provided by H164, H209, and H265. Substrate contacts are provided by K273, N282, and R291.

This sequence belongs to the PdxA family. In terms of assembly, homodimer. Zn(2+) is required as a cofactor. Mg(2+) serves as cofactor. It depends on Co(2+) as a cofactor.

The protein resides in the cytoplasm. The enzyme catalyses 4-(phosphooxy)-L-threonine + NAD(+) = 3-amino-2-oxopropyl phosphate + CO2 + NADH. It functions in the pathway cofactor biosynthesis; pyridoxine 5'-phosphate biosynthesis; pyridoxine 5'-phosphate from D-erythrose 4-phosphate: step 4/5. Functionally, catalyzes the NAD(P)-dependent oxidation of 4-(phosphooxy)-L-threonine (HTP) into 2-amino-3-oxo-4-(phosphooxy)butyric acid which spontaneously decarboxylates to form 3-amino-2-oxopropyl phosphate (AHAP). This Vibrio vulnificus (strain YJ016) protein is 4-hydroxythreonine-4-phosphate dehydrogenase.